We begin with the raw amino-acid sequence, 318 residues long: NADH-ubiquinone oxidoreductase chain 1 (318 aa).

Transmembrane regions (helical) follow at residues 2–22 (FFIN…FLTL), 70–90 (MFIL…IPLP), 100–120 (LGVL…LWSG), 147–167 (AIIL…TLII), 171–191 (HMWL…STLA), 223–243 (FFLA…ILFF), 253–273 (ELYS…FLWI), and 294–314 (LPLT…TASI).

This sequence belongs to the complex I subunit 1 family. Core subunit of respiratory chain NADH dehydrogenase (Complex I) which is composed of 45 different subunits.

Its subcellular location is the mitochondrion inner membrane. The catalysed reaction is a ubiquinone + NADH + 5 H(+)(in) = a ubiquinol + NAD(+) + 4 H(+)(out). Functionally, core subunit of the mitochondrial membrane respiratory chain NADH dehydrogenase (Complex I) which catalyzes electron transfer from NADH through the respiratory chain, using ubiquinone as an electron acceptor. Essential for the catalytic activity and assembly of complex I. The chain is NADH-ubiquinone oxidoreductase chain 1 (MT-ND1) from Canis lupus familiaris (Dog).